The sequence spans 366 residues: S-adenosylmethionine decarboxylase proenzyme 1 (366 aa).

Active-site residues include Glu-9 and Glu-12. Glu-68 contributes to the substrate binding site. The active-site Schiff-base intermediate with substrate; via pyruvic acid is Ser-69. Ser-69 is subject to Pyruvic acid (Ser); by autocatalysis. Cys-83 (proton donor; for catalytic activity) is an active-site residue. Active-site proton acceptor; for processing activity residues include Ser-233 and His-246. Residue Glu-250 coordinates substrate.

The protein belongs to the eukaryotic AdoMetDC family. It depends on pyruvate as a cofactor. In terms of processing, is synthesized initially as an inactive proenzyme. Formation of the active enzyme involves a self-maturation process in which the active site pyruvoyl group is generated from an internal serine residue via an autocatalytic post-translational modification. Two non-identical subunits are generated from the proenzyme in this reaction, and the pyruvate is formed at the N-terminus of the alpha chain, which is derived from the carboxyl end of the proenzyme. The post-translation cleavage follows an unusual pathway, termed non-hydrolytic serinolysis, in which the side chain hydroxyl group of the serine supplies its oxygen atom to form the C-terminus of the beta chain, while the remainder of the serine residue undergoes an oxidative deamination to produce ammonia and the pyruvoyl group blocking the N-terminus of the alpha chain.

The catalysed reaction is S-adenosyl-L-methionine + H(+) = S-adenosyl 3-(methylsulfanyl)propylamine + CO2. The protein operates within amine and polyamine biosynthesis; S-adenosylmethioninamine biosynthesis; S-adenosylmethioninamine from S-adenosyl-L-methionine: step 1/1. Functionally, essential for biosynthesis of the polyamines spermidine and spermine. Essential for polyamine homeostasis, and normal plant embryogenesis, growth and development. This is S-adenosylmethionine decarboxylase proenzyme 1 from Arabidopsis thaliana (Mouse-ear cress).